A 301-amino-acid polypeptide reads, in one-letter code: Probable aspartoacylase (301 aa).

2 residues coordinate Zn(2+): His-13 and Glu-16. Residues Arg-54 and 61–62 contribute to the substrate site; that span reads NR. Zn(2+) is bound at residue His-105. Positions 163 and 273 each coordinate substrate.

Belongs to the AspA/AstE family. Aspartoacylase subfamily. The cofactor is Zn(2+).

The catalysed reaction is an N-acyl-L-aspartate + H2O = a carboxylate + L-aspartate. This chain is Probable aspartoacylase, found in Prochlorococcus marinus (strain AS9601).